A 125-amino-acid chain; its full sequence is DNA-directed RNA polymerase I subunit RPA12 (125 aa).

The segment at 1-60 is interaction with RPA2; it reads MSVVGSLIFCLDCGDLLENPNAVLGSNVECSQCKAIYPKSQFSNLKVVTTTADDAFPSSL. A necessary and sufficient for recruitment into Pol I region spans residues 1-69; sequence MSVVGSLIFC…LRAKKSVVKT (69 aa). Zn(2+) contacts are provided by C10, C13, C30, C33, C86, C89, C114, and C117. The segment at 10 to 33 adopts a C4-type zinc-finger fold; the sequence is CLDCGDLLENPNAVLGSNVECSQC. The required for RNA cleavage, but not essential for elongation activity stretch occupies residues 79-125; it reads GATIKEKCPQCGNEEMNYHTLQLRSADEGATVFYTCTSCGYKFRTNN. The TFIIS-type zinc finger occupies 82-122; it reads IKEKCPQCGNEEMNYHTLQLRSADEGATVFYTCTSCGYKFR.

It belongs to the archaeal RpoM/eukaryotic RPA12/RPB9/RPC11 RNA polymerase family. In terms of assembly, component of the RNA polymerase I (Pol I) complex consisting of 14 subunits: RPA135, RPA190, RPC40, RPA14, RPB5, RPO26, RPA43, RPB8, RPA12, RPB10, RPC19, RPC10, RPA49 and RPA34. The complex is composed of a horseshoe-shaped core containing ten subunits (RPA135, RPA190, RPB5, RPO26, RPB8, RPB10, RPC10, RPA12, RPC19 and RPC40) where RPA135 and RPA190 form the DNA-binding cleft. Outside of the core, RPA14 and RPA43 form the stalk that mediates interactions with transcription initiation factors and newly synthesized RNA. Interacts with RPA2/RPA135. Peripheral subunit that binds the catalytic zinc ion that is required for RNA cleavage. The heterodimer formed by RPA34 and RPA49 stabilizes subunit RPA12 and stimulates RPA12-dependent RNA cleavage. Involved in the recruitment of RPA49 to Pol I.

It is found in the nucleus. The protein localises to the nucleolus. Functionally, DNA-dependent RNA polymerases catalyze the transcription of DNA into RNA using the four ribonucleoside triphosphates as substrates. Component of RNA polymerase I (Pol I) which synthesizes ribosomal RNA precursors. Besides, RNA polymerase I has intrinsic RNA cleavage activity. Proposed to contribute to the polymerase catalytic activity and form the polymerase active center together with the two largest subunits. Subunit RPA12 contributes a catalytic zinc ribbon that is required for RNA cleavage by Pol I. Involved in transcriptional termination. In Saccharomyces cerevisiae (strain ATCC 204508 / S288c) (Baker's yeast), this protein is DNA-directed RNA polymerase I subunit RPA12 (RPA12).